A 702-amino-acid polypeptide reads, in one-letter code: MFYQPAQNKKQYDDLADIEAQNNVPNTQEVLEAWQESLDSDEDESSPLEESNGFTISEHDDFVKSVPRKNNPTDLLYSGKLLDSDEPPSVHGNSSKVPSKHPSPSFPETTSLRNLQNGSKQKPALPNFNDPHFYNEDVTRSGHPNRSIYTQLPRNEFSNARVLWNRLSARDRVLWRWANVENLDSFLQQVYTYYTGKGLSCIIVHRLFQILTVSFVIGFTTFITSCIDWPAVTPHGSLAGVTKSQCIAQMSPITYLVLWLFLSFLLALWIYYLTDIPRLWQMREFYIHALKIATADMPTVSWQRVLYRLLKLKNVNALTAEDGRVVSLHNMKRLDAYAIANRIMRKDNYFIALINNGIINIELPLLHRRILTHTTEWNINWCIFNFVFDEQGQLRSAFRNPNSRKRLSEELRRRFIVAGFLNCLFAPIVAIYLVIHNFFRYFNEYHKNPGALSTRRYTPLALWTFREYNELQHFFDERINDSYAAASHYVSQFPDFNMIRLFKYISFILGSFTAILVIITVFDPELMVTFEITKDRSVLFYLGLFGSLIAVSRSIIPDETLVFAPEKALRRVITFTHYMPGWWSDNMHSKAVQQEFCSLYSYRIVNLLWEILGILLTPVLLFFTFPSCSQDIVDFFREHTINVEGVGYVCSYAVFQDNPPYESVASLVQSRKISPLIQNKPELSRISFYEQFNTEAPRRDLR.

Over 1 to 205 (MFYQPAQNKK…GKGLSCIIVH (205 aa)) the chain is Cytoplasmic. Residues 35–128 (QESLDSDEDE…SKQKPALPNF (94 aa)) form a disordered region. Over residues 38 to 47 (LDSDEDESSP) the composition is skewed to acidic residues. Residues 94–107 (SSKVPSKHPSPSFP) show a composition bias toward low complexity. The span at 108–120 (ETTSLRNLQNGSK) shows a compositional bias: polar residues. The chain crosses the membrane as a helical span at residues 206–223 (RLFQILTVSFVIGFTTFI). Over 224 to 251 (TSCIDWPAVTPHGSLAGVTKSQCIAQMS) the chain is Lumenal. A helical transmembrane segment spans residues 252–270 (PITYLVLWLFLSFLLALWI). At 271-421 (YYLTDIPRLW…RRRFIVAGFL (151 aa)) the chain is on the cytoplasmic side. The stretch at 422 to 446 (NCLFAPIVAIYLVIHNFFRYFNEYH) is an intramembrane region. The Cytoplasmic portion of the chain corresponds to 447-496 (KNPGALSTRRYTPLALWTFREYNELQHFFDERINDSYAAASHYVSQFPDF). Residues 497 to 522 (NMIRLFKYISFILGSFTAILVIITVF) traverse the membrane as a helical segment. Topologically, residues 523-537 (DPELMVTFEITKDRS) are lumenal. The helical transmembrane segment at 538–555 (VLFYLGLFGSLIAVSRSI) threads the bilayer. Over 556 to 603 (IPDETLVFAPEKALRRVITFTHYMPGWWSDNMHSKAVQQEFCSLYSYR) the chain is Cytoplasmic. The stretch at 604–624 (IVNLLWEILGILLTPVLLFFT) is an intramembrane region. Over 625–702 (FPSCSQDIVD…NTEAPRRDLR (78 aa)) the chain is Cytoplasmic.

It belongs to the ATG9 family. As to quaternary structure, homotrimer; forms a homotrimer with a central pore that forms a path between the two membrane leaflets. Interacts with ctl1. In terms of processing, phosphorylated by atg1. Atg1 phosphorylation is required for preautophagosome elongation.

It localises to the preautophagosomal structure membrane. The protein localises to the cytoplasmic vesicle membrane. It is found in the golgi apparatus membrane. Its subcellular location is the endoplasmic reticulum membrane. It carries out the reaction a 1,2-diacyl-sn-glycero-3-phosphocholine(in) = a 1,2-diacyl-sn-glycero-3-phosphocholine(out). The catalysed reaction is a 1,2-diacyl-sn-glycero-3-phospho-L-serine(in) = a 1,2-diacyl-sn-glycero-3-phospho-L-serine(out). It catalyses the reaction a 1,2-diacyl-sn-glycero-3-phosphoethanolamine(in) = a 1,2-diacyl-sn-glycero-3-phosphoethanolamine(out). The enzyme catalyses a 1,2-diacyl-sn-glycero-3-phospho-(1D-myo-inositol-3-phosphate)(in) = a 1,2-diacyl-sn-glycero-3-phospho-(1D-myo-inositol-3-phosphate)(out). Phospholipid scramblase involved in autophagy and cytoplasm to vacuole transport (Cvt) vesicle formation. Cycles between the preautophagosomal structure/phagophore assembly site (PAS) and the cytoplasmic vesicle pool and supplies membrane for the growing autophagosome. Lipid scramblase activity plays a key role in preautophagosomal structure/phagophore assembly by distributing the phospholipids that arrive through atg2 from the cytoplasmic to the luminal leaflet of the bilayer, thereby driving autophagosomal membrane expansion. Also involved in endoplasmic reticulum-specific autophagic process and is essential for the survival of cells subjected to severe ER stress. Different machineries are required for anterograde trafficking to the PAS during either the Cvt pathway or bulk autophagy and for retrograde trafficking. Has a role in meiosis and sporulation. This Schizosaccharomyces pombe (strain 972 / ATCC 24843) (Fission yeast) protein is Autophagy-related protein 9.